The chain runs to 173 residues: MTIVLGIDPGSRITGYGVICKQGKILSYLASGCIRTKTNDFPNRLKRIYIDVNQVITQFKPLVFAIEQLFIAKNMNSALKLSQARSVAIVVAMNNNIPVFEYAARQVKKTLVGIGSADKHQVKHMVRTILNLSNNPQTDAADALAIAITHCYISENTNRISSKNLILARGRLR.

Residues D8, E67, and D139 contribute to the active site. D8, E67, and D139 together coordinate Mg(2+).

The protein belongs to the RuvC family. In terms of assembly, homodimer which binds Holliday junction (HJ) DNA. The HJ becomes 2-fold symmetrical on binding to RuvC with unstacked arms; it has a different conformation from HJ DNA in complex with RuvA. In the full resolvosome a probable DNA-RuvA(4)-RuvB(12)-RuvC(2) complex forms which resolves the HJ. Requires Mg(2+) as cofactor.

Its subcellular location is the cytoplasm. The enzyme catalyses Endonucleolytic cleavage at a junction such as a reciprocal single-stranded crossover between two homologous DNA duplexes (Holliday junction).. Its function is as follows. The RuvA-RuvB-RuvC complex processes Holliday junction (HJ) DNA during genetic recombination and DNA repair. Endonuclease that resolves HJ intermediates. Cleaves cruciform DNA by making single-stranded nicks across the HJ at symmetrical positions within the homologous arms, yielding a 5'-phosphate and a 3'-hydroxyl group; requires a central core of homology in the junction. The consensus cleavage sequence is 5'-(A/T)TT(C/G)-3'. Cleavage occurs on the 3'-side of the TT dinucleotide at the point of strand exchange. HJ branch migration catalyzed by RuvA-RuvB allows RuvC to scan DNA until it finds its consensus sequence, where it cleaves and resolves the cruciform DNA. The protein is Crossover junction endodeoxyribonuclease RuvC of Baumannia cicadellinicola subsp. Homalodisca coagulata.